Consider the following 173-residue polypeptide: Crossover junction endodeoxyribonuclease RuvC (173 aa).

Catalysis depends on residues Asp-8, Glu-69, and Asp-141. Mg(2+)-binding residues include Asp-8, Glu-69, and Asp-141.

The protein belongs to the RuvC family. Homodimer which binds Holliday junction (HJ) DNA. The HJ becomes 2-fold symmetrical on binding to RuvC with unstacked arms; it has a different conformation from HJ DNA in complex with RuvA. In the full resolvosome a probable DNA-RuvA(4)-RuvB(12)-RuvC(2) complex forms which resolves the HJ. Requires Mg(2+) as cofactor.

It localises to the cytoplasm. It carries out the reaction Endonucleolytic cleavage at a junction such as a reciprocal single-stranded crossover between two homologous DNA duplexes (Holliday junction).. Its function is as follows. The RuvA-RuvB-RuvC complex processes Holliday junction (HJ) DNA during genetic recombination and DNA repair. Endonuclease that resolves HJ intermediates. Cleaves cruciform DNA by making single-stranded nicks across the HJ at symmetrical positions within the homologous arms, yielding a 5'-phosphate and a 3'-hydroxyl group; requires a central core of homology in the junction. The consensus cleavage sequence is 5'-(A/T)TT(C/G)-3'. Cleavage occurs on the 3'-side of the TT dinucleotide at the point of strand exchange. HJ branch migration catalyzed by RuvA-RuvB allows RuvC to scan DNA until it finds its consensus sequence, where it cleaves and resolves the cruciform DNA. The chain is Crossover junction endodeoxyribonuclease RuvC from Stenotrophomonas maltophilia (strain R551-3).